We begin with the raw amino-acid sequence, 521 residues long: Occludin (521 aa).

Positions 1–20 (MSVRPFESPPPYRPDEFKPN) are disordered. The Cytoplasmic portion of the chain corresponds to 1 to 66 (MSVRPFESPP…KWTSPPGVIR (66 aa)). The MARVEL domain occupies 60 to 267 (SPPGVIRILS…IIFFAVKTRR (208 aa)). A helical transmembrane segment spans residues 67–89 (ILSMLIIVMCIAIFACVASTLAW). Residues 90–133 (DRGYGTGLFGGSLNYPYSGFGYGGGYGGGYGGYGYGYGGYTDPR) are Extracellular-facing. The helical transmembrane segment at 134–158 (AAKGFLLAMAAFCFIASLVIFVTSV) threads the bilayer. Over 159–168 (IRSGMSRTRR) the chain is Cytoplasmic. The helical transmembrane segment at 169–193 (YYLIVIIVSAILGIMVFIATIVYIM) threads the bilayer. The Extracellular segment spans residues 194–241 (GVNPTAQASGSMYGSQIYMICNQFYTPGGTGLYVDQYLYHYCVVDPQE). Cysteine 214 and cysteine 235 are oxidised to a cystine. The chain crosses the membrane as a helical span at residues 242 to 263 (AIAIVLGFMIIVAFALIIFFAV). Residues 264–521 (KTRRKMDRYD…MVGDYDRRKP (258 aa)) are Cytoplasmic-facing. The residue at position 300 (serine 300) is a Phosphoserine. Positions 300–329 (SAGTQDMPPPPSDYAERVDSPMAYSSNGKV) are disordered. Threonine 303 is subject to Phosphothreonine. Serine 311 and serine 319 each carry phosphoserine. The residue at position 338 (serine 338) is a Phosphoserine; by PKC; in vitro. Serine 358 bears the Phosphoserine mark. Residues 361–405 (DFRQPRYSSNGNLETPSKRAPTKGKAGKGKRTDPDHYETDYTTGG) form a disordered region. A compositionally biased stretch (polar residues) spans 366–375 (RYSSNGNLET). Residue tyrosine 367 is modified to Phosphotyrosine. Phosphoserine occurs at positions 368 and 369. The span at 380–389 (APTKGKAGKG) shows a compositional bias: basic residues. Basic and acidic residues predominate over residues 390–399 (KRTDPDHYET). Phosphotyrosine is present on residues tyrosine 397 and tyrosine 401. Residue threonine 402 is modified to Phosphothreonine; by PKC/PRKCH. Threonine 403 is modified (phosphothreonine). Serine 407 is modified (phosphoserine). Positions 413–521 (EDWVREYPPI…MVGDYDRRKP (109 aa)) constitute an OCEL domain. Residues 424–488 (SDQQRQLYKR…EYNRLKQVKG (65 aa)) adopt a coiled-coil conformation. At serine 489 the chain carries Phosphoserine.

Belongs to the ELL/occludin family. As to quaternary structure, interacts with TJP1/ZO1. Interacts with VAPA. Interacts with CLDN1, CLDN6, CLDN9, CLDN11, CLDN12 and CLDN17. Interacts with PLSCR1. Interacts with LSR, ILDR1 and ILDR2. Interacts with TJP2/ZO2. Dephosphorylated by PTPRJ. May be phosphorylated by PKC during translocation to cell-cell contacts. Localized at tight junctions of both epithelial and endothelial cells. Highly expressed in the testis, kidney, lung, liver and brain. Not detected in skeletal muscle, spleen and heart.

The protein resides in the cell membrane. It is found in the cell junction. It localises to the tight junction. Its function is as follows. May play a role in the formation and regulation of the tight junction (TJ) paracellular permeability barrier. This Mus musculus (Mouse) protein is Occludin (Ocln).